A 634-amino-acid chain; its full sequence is NRPS-independent siderophore synthetase rfs (634 aa).

In terms of biological role, NRPS-independent siderophore synthetase that catalyzes the rhizoferrin biosynthesis from citrate and diaminobutane via an ATP-dependent condensation of citrate with diaminobutane followed by the addition of a second citrate to the monocitryl-diaminobutane intermediate. Can also use as substrates the citrate and diaminobutane homologs oxaloacetic acid, diaminopropane, diaminobutane, diaminopentane, tricarballylic acid, hydroxylamine and ornithine. Forms only a mono-substituted intermediate with oxaloacetic acid and diaminopentane whereas both mono-citryl intermediates and full rhizoferrin derivatives were detected when diaminopropane, and ornithine were used as substrates. Tricarballylic acid only forms a rhizoferrin derivative, but no mono-substituted intermediate. The chain is NRPS-independent siderophore synthetase rfs from Rhizopus delemar (strain RA 99-880 / ATCC MYA-4621 / FGSC 9543 / NRRL 43880) (Mucormycosis agent).